The sequence spans 418 residues: Putative ion-transport protein YfeO (418 aa).

Transmembrane regions (helical) follow at residues 9-31 (MLLL…IMVM), 55-77 (SPLW…IRFS), 90-112 (LIGA…LGLA), 122-140 (PIIT…RLLP), 147-169 (WTIL…AALI), 189-211 (PLMA…FSLP), 223-244 (ILSG…VWCL), 259-281 (FVLG…VSLF), 301-323 (YFLL…FRGG), 343-363 (VPAV…VLVV), and 376-398 (VVVP…WLLL).

This sequence belongs to the chloride channel (TC 2.A.49) family.

Its subcellular location is the cell membrane. The sequence is that of Putative ion-transport protein YfeO (yfeO) from Escherichia coli O6:H1 (strain CFT073 / ATCC 700928 / UPEC).